A 99-amino-acid polypeptide reads, in one-letter code: UPF0235 protein Sbal_3028 (99 aa).

This sequence belongs to the UPF0235 family.

The polypeptide is UPF0235 protein Sbal_3028 (Shewanella baltica (strain OS155 / ATCC BAA-1091)).